The primary structure comprises 418 residues: Zinc metalloproteinase-disintegrin-like batroxstatin-2 (418 aa).

The region spanning 10–206 (KYVKLVLVAD…DMPQCILEKP (197 aa)) is the Peptidase M12B domain. 3 disulfide bridges follow: Cys-121–Cys-201, Cys-161–Cys-185, and Cys-163–Cys-168. Zn(2+) is bound at residue His-146. The active site involves Glu-147. Zn(2+) is bound by residues His-150 and His-156. The Disintegrin domain occupies 214–299 (PPVCGNYFVE…AECTDRFQRN (86 aa)). The Ca(2+) site is built by Val-216, Asn-219, Phe-221, Glu-223, Glu-226, and Asp-229. Disulfide bonds link Cys-217/Cys-246, Cys-228/Cys-241, Cys-230/Cys-236, Cys-240/Cys-263, Cys-254/Cys-260, Cys-259/Cys-285, Cys-272/Cys-292, Cys-279/Cys-310, Cys-303/Cys-315, Cys-322/Cys-372, Cys-337/Cys-383, Cys-350/Cys-360, Cys-367/Cys-409, and Cys-403/Cys-414. A D/ECD-tripeptide motif is present at residues 278–280 (ECD). Asp-280, Met-281, Asp-283, Asp-294, and Arg-295 together coordinate Ca(2+). Residue Asn-312 is glycosylated (N-linked (GlcNAc...) asparagine).

This sequence belongs to the venom metalloproteinase (M12B) family. P-III subfamily. P-IIIc sub-subfamily. Homodimer; disulfide-linked. It depends on Zn(2+) as a cofactor. In terms of tissue distribution, expressed by the venom gland.

Its subcellular location is the secreted. Snake venom zinc metalloprotease that induces apoptosis in vascular endothelial cells (VEC), without degrading the extracellular matrix (it cannot cleave collagen) or inhibiting adhesion of VEC. Has also fibrinogenolytic and hemorrhagic activities. The polypeptide is Zinc metalloproteinase-disintegrin-like batroxstatin-2 (Bothrops atrox (Barba amarilla)).